Here is a 197-residue protein sequence, read N- to C-terminus: Pyridoxal 5'-phosphate synthase subunit PdxT (197 aa).

53-55 serves as a coordination point for L-glutamine; sequence GES. C85 functions as the Nucleophile in the catalytic mechanism. L-glutamine-binding positions include R114 and 142-143; that span reads IR. Active-site charge relay system residues include H179 and E181.

It belongs to the glutaminase PdxT/SNO family. In the presence of PdxS, forms a dodecamer of heterodimers. Only shows activity in the heterodimer.

It catalyses the reaction aldehydo-D-ribose 5-phosphate + D-glyceraldehyde 3-phosphate + L-glutamine = pyridoxal 5'-phosphate + L-glutamate + phosphate + 3 H2O + H(+). It carries out the reaction L-glutamine + H2O = L-glutamate + NH4(+). The protein operates within cofactor biosynthesis; pyridoxal 5'-phosphate biosynthesis. In terms of biological role, catalyzes the hydrolysis of glutamine to glutamate and ammonia as part of the biosynthesis of pyridoxal 5'-phosphate. The resulting ammonia molecule is channeled to the active site of PdxS. The polypeptide is Pyridoxal 5'-phosphate synthase subunit PdxT (Thermococcus kodakarensis (strain ATCC BAA-918 / JCM 12380 / KOD1) (Pyrococcus kodakaraensis (strain KOD1))).